Here is a 70-residue protein sequence, read N- to C-terminus: Exodeoxyribonuclease 7 small subunit (70 aa).

Belongs to the XseB family. In terms of assembly, heterooligomer composed of large and small subunits.

It localises to the cytoplasm. The enzyme catalyses Exonucleolytic cleavage in either 5'- to 3'- or 3'- to 5'-direction to yield nucleoside 5'-phosphates.. Its function is as follows. Bidirectionally degrades single-stranded DNA into large acid-insoluble oligonucleotides, which are then degraded further into small acid-soluble oligonucleotides. This chain is Exodeoxyribonuclease 7 small subunit, found in Streptococcus gordonii (strain Challis / ATCC 35105 / BCRC 15272 / CH1 / DL1 / V288).